Here is a 389-residue protein sequence, read N- to C-terminus: Mannitol-1-phosphate 5-dehydrogenase (389 aa).

Residue 5–16 coordinates NAD(+); it reads AIQFGGGNIGRG. Residue K214 is part of the active site.

The protein belongs to the mannitol dehydrogenase family. As to quaternary structure, monomer.

The catalysed reaction is D-mannitol 1-phosphate + NAD(+) = beta-D-fructose 6-phosphate + NADH + H(+). In terms of biological role, catalyzes the NAD(H)-dependent interconversion of D-fructose 6-phosphate and D-mannitol 1-phosphate in the mannitol metabolic pathway. The protein is Mannitol-1-phosphate 5-dehydrogenase of Talaromyces marneffei (strain ATCC 18224 / CBS 334.59 / QM 7333) (Penicillium marneffei).